Reading from the N-terminus, the 727-residue chain is Non-structural protein 4 (727 aa).

Disordered regions lie at residues 1 to 38 (MNQS…PSEG) and 671 to 727 (GNSM…KLSK). A compositionally biased stretch (polar residues) spans 17–38 (RTPSALSSNSETPGSMSSPSEG). The span at 712 to 727 (SRRKARKARAASKLSK) shows a compositional bias: basic residues.

This Rice dwarf virus (isolate Fujian) (RDV) protein is Non-structural protein 4.